The sequence spans 514 residues: Serine--tRNA ligase, cytoplasmic (514 aa).

The residue at position 1 (Met1) is an N-acetylmethionine. Residues Arg9–Ser61 form an interaction with tRNA region. Ser241 bears the Phosphoserine mark. Residues Thr271 and Arg302 each coordinate L-serine. ATP-binding positions include Arg302 to Glu304 and Val318 to Phe321. Lys323 carries the post-translational modification N6-acetyllysine. Glu325 serves as a coordination point for L-serine. Glu391–Ser394 is a binding site for ATP. Residue Asn427 participates in L-serine binding. Positions Pro473 to Ala514 are disordered. Residues Glu479–Leu502 are compositionally biased toward basic and acidic residues. The Nuclear localization signal signature appears at Lys482–Lys494. The segment covering Asn504–Ala514 has biased composition (polar residues).

It belongs to the class-II aminoacyl-tRNA synthetase family. Type-1 seryl-tRNA synthetase subfamily. Homodimer. The tRNA molecule may bind across the dimer. Interacts with SIRT2. Interacts with METTL6; interaction is required for the tRNA N(3)-methylcytidine methyltransferase activity of METTL6. As to expression, brain.

Its subcellular location is the cytoplasm. It is found in the nucleus. The catalysed reaction is tRNA(Ser) + L-serine + ATP = L-seryl-tRNA(Ser) + AMP + diphosphate + H(+). It carries out the reaction tRNA(Sec) + L-serine + ATP = L-seryl-tRNA(Sec) + AMP + diphosphate + H(+). It functions in the pathway aminoacyl-tRNA biosynthesis; selenocysteinyl-tRNA(Sec) biosynthesis; L-seryl-tRNA(Sec) from L-serine and tRNA(Sec): step 1/1. Functionally, catalyzes the attachment of serine to tRNA(Ser) in a two-step reaction: serine is first activated by ATP to form Ser-AMP and then transferred to the acceptor end of tRNA(Ser). Is probably also able to aminoacylate tRNA(Sec) with serine, to form the misacylated tRNA L-seryl-tRNA(Sec), which will be further converted into selenocysteinyl-tRNA(Sec). In the nucleus, binds to the VEGFA core promoter and prevents MYC binding and transcriptional activation by MYC. Recruits SIRT2 to the VEGFA promoter, promoting deacetylation of histone H4 at 'Lys-16' (H4K16). Thereby, inhibits the production of VEGFA and sprouting angiogenesis mediated by VEGFA. This Homo sapiens (Human) protein is Serine--tRNA ligase, cytoplasmic.